The sequence spans 258 residues: Small ribosomal subunit protein mS40 (258 aa).

A mitochondrion-targeting transit peptide spans 1 to 35; the sequence is MAASVLNVLLRRLPYFSPFRGAYGVQVPLQTLCTK. Ser49 bears the Phosphoserine mark. A disordered region spans residues 221 to 258; it reads QGHLREESGPPPESMPKVPLTAPNEATSTEQAGPQSAL. A compositionally biased stretch (polar residues) spans 244 to 258; it reads NEATSTEQAGPQSAL.

This sequence belongs to the bacterial ribosomal protein bS18 family. Mitochondrion-specific ribosomal protein mS40 subfamily. In terms of assembly, component of the mitochondrial ribosome small subunit (28S) which comprises a 12S rRNA and about 30 distinct proteins.

It localises to the mitochondrion. This Bos taurus (Bovine) protein is Small ribosomal subunit protein mS40.